A 95-amino-acid polypeptide reads, in one-letter code: uncharacterized protein (95 aa).

The N-terminal stretch at 1–19 (MAILMLSLQLILLLIPSIS) is a signal peptide. N-linked (GlcNAc...) asparagine glycosylation is found at N38 and N41.

It localises to the secreted. This is an uncharacterized protein from Homo sapiens (Human).